Consider the following 310-residue polypeptide: Protein A56 (310 aa).

A signal peptide spans 1–16 (MKQLSIVILLLSIVYT). Residues 17 to 275 (TKPHPTQISK…TKYTTSDFIE (259 aa)) lie on the Virion surface side of the membrane. The 103-residue stretch at 19–121 (PHPTQISKKL…TNDTDKIDYE (103 aa)) folds into the Ig-like V-type domain. Cys36 and Cys105 are disulfide-bonded. 3 N-linked (GlcNAc...) asparagine; by host glycosylation sites follow: Asn39, Asn113, and Asn133. The segment at 153–195 (HTEEQHDSDTTICTSESTTQISETSESTTSSQISETSESTSYG) is disordered. The segment covering 162 to 193 (TTICTSESTTQISETSESTTSSQISETSESTS) has biased composition (low complexity). Asn203 carries an N-linked (GlcNAc...) asparagine; by host glycan. A helical membrane pass occupies residues 276-300 (IFGIVSLILLLAVAIFCIIYYFCSG). The Intravirion segment spans residues 301 to 310 (RSRKQETNIL).

As to quaternary structure, heterodimerizes with K2. The heterodimer A56/K2 interacts with components of the entry fusion complex A16 and G9. Interacts with K2 protein. Heterodimer with C3/VPC protein; disulfide-linked. Glycosylated; contains phosphate and sulfate-substituted glycans. O-glycosylation is required for hemagglutination and hemadsorption activities of infected cell membranes.

Its subcellular location is the virion membrane. It is found in the host membrane. In terms of biological role, prevents cell to cell fusion by interacting with and directing the viral K2 protein on the host plasma membrane. The A56-K2 complex associates with components of the entry fusion complex (EFC) presumably to avoid superinfection and syncytium formation. Via its interaction with C3/VCP protein, protects the infected cell and probably also the extracellular enveloped virus from complement attack. The sequence is that of Protein A56 (HA) from Raccoon poxvirus (RCN).